Here is a 64-residue protein sequence, read N- to C-terminus: Alpha-conotoxin-like Lp1.8 (64 aa).

Residues 1–21 (MGMRMMFTMFLLVVLTTTVVS) form the signal peptide. Residues 22–41 (FNSDRESNHENRRTSNQITR) constitute a propeptide that is removed on maturation. Intrachain disulfides connect Cys47–Cys53 and Cys48–Cys61. Positions 49–51 (KDP) are lacks the Ser-Xaa-Pro motif that is crucial for potent interaction with nAChR.

This sequence belongs to the conotoxin A superfamily. As to expression, expressed by the venom duct.

It localises to the secreted. Functionally, alpha-conotoxins act on postsynaptic membranes, they bind to the nicotinic acetylcholine receptors (nAChR) and thus inhibit them. Has possibly a distinct nAChR binding mode from other alpha-conotoxins, due to a different three residue motif (Lys-Xaa-Pro instead of the conserved Ser-Xaa-Pro motif). This Conus leopardus (Leopard cone) protein is Alpha-conotoxin-like Lp1.8.